A 140-amino-acid chain; its full sequence is 3-hydroxyacyl-[acyl-carrier-protein] dehydratase FabZ (140 aa).

Residue H48 is part of the active site.

The protein belongs to the thioester dehydratase family. FabZ subfamily.

Its subcellular location is the cytoplasm. The enzyme catalyses a (3R)-hydroxyacyl-[ACP] = a (2E)-enoyl-[ACP] + H2O. Its function is as follows. Involved in unsaturated fatty acids biosynthesis. Catalyzes the dehydration of short chain beta-hydroxyacyl-ACPs and long chain saturated and unsaturated beta-hydroxyacyl-ACPs. The chain is 3-hydroxyacyl-[acyl-carrier-protein] dehydratase FabZ from Ligilactobacillus salivarius (strain UCC118) (Lactobacillus salivarius).